Reading from the N-terminus, the 165-residue chain is Coronafacic acid dehydratase (165 aa).

Residue histidine 62 is part of the active site.

The protein belongs to the thioester dehydratase family.

Its pathway is phytotoxin biosynthesis; coronatine biosynthesis. This chain is Coronafacic acid dehydratase (cfa2), found in Pseudomonas savastanoi pv. glycinea (Pseudomonas syringae pv. glycinea).